A 362-amino-acid polypeptide reads, in one-letter code: Class I histocompatibility antigen, Gogo-B*0101 alpha chain (362 aa).

The first 24 residues, 1-24, serve as a signal peptide directing secretion; sequence MRVTAPRTLLLLLSAALALTETWA. Residues 25 to 114 are alpha-1; that stretch reads GSHSMRYFDT…ALRYYNQSEA (90 aa). The Extracellular segment spans residues 25 to 308; it reads GSHSMRYFDT…EPSSQSTIPI (284 aa). N-linked (GlcNAc...) asparagine glycosylation occurs at asparagine 110. The tract at residues 115-206 is alpha-2; the sequence is GSHTIQRMFG…ENGRETLQRA (92 aa). 2 disulfide bridges follow: cysteine 125/cysteine 188 and cysteine 227/cysteine 283. The alpha-3 stretch occupies residues 207–298; it reads DTPKTHVTHH…GLPKPLTLRW (92 aa). The Ig-like C1-type domain occupies 209–295; that stretch reads PKTHVTHHPI…QHEGLPKPLT (87 aa). Residues 299–308 form a connecting peptide region; that stretch reads EPSSQSTIPI. Residues 309–332 traverse the membrane as a helical segment; the sequence is VGIVAGLAVLAVVVIGAVVTAVIC. Over 333-362 the chain is Cytoplasmic; that stretch reads RRKSSGGKGGSYSQAASSDSAQGSDVSLTA. Residues 335-362 form a disordered region; it reads KSSGGKGGSYSQAASSDSAQGSDVSLTA. The span at 343–362 shows a compositional bias: low complexity; sequence SYSQAASSDSAQGSDVSLTA. Residues serine 356 and serine 359 each carry the phosphoserine modification.

This sequence belongs to the MHC class I family. As to quaternary structure, heterodimer of an alpha chain and a beta chain (beta-2-microglobulin).

The protein resides in the membrane. Its function is as follows. Involved in the presentation of foreign antigens to the immune system. The sequence is that of Class I histocompatibility antigen, Gogo-B*0101 alpha chain from Gorilla gorilla gorilla (Western lowland gorilla).